The following is a 77-amino-acid chain: Small ribosomal subunit protein bS21 (77 aa).

The protein belongs to the bacterial ribosomal protein bS21 family.

This is Small ribosomal subunit protein bS21 from Methylococcus capsulatus (strain ATCC 33009 / NCIMB 11132 / Bath).